Here is a 188-residue protein sequence, read N- to C-terminus: Elongation factor P (188 aa).

The disordered stretch occupies residues 139–163 (PVTKGQTASSSYKPATLSNGVRTQV). Positions 142-160 (KGQTASSSYKPATLSNGVR) are enriched in polar residues.

This sequence belongs to the elongation factor P family.

Its subcellular location is the cytoplasm. It participates in protein biosynthesis; polypeptide chain elongation. Its function is as follows. Involved in peptide bond synthesis. Stimulates efficient translation and peptide-bond synthesis on native or reconstituted 70S ribosomes in vitro. Probably functions indirectly by altering the affinity of the ribosome for aminoacyl-tRNA, thus increasing their reactivity as acceptors for peptidyl transferase. This chain is Elongation factor P, found in Methylobacterium nodulans (strain LMG 21967 / CNCM I-2342 / ORS 2060).